Reading from the N-terminus, the 65-residue chain is Large ribosomal subunit protein bL35 (65 aa).

The interval 1 to 26 (MPKIKTLRSAAKRFKKTESGKFKRKQ) is disordered.

Belongs to the bacterial ribosomal protein bL35 family.

The protein is Large ribosomal subunit protein bL35 of Buchnera aphidicola subsp. Baizongia pistaciae (strain Bp).